Here is a 382-residue protein sequence, read N- to C-terminus: Sulfate adenylyltransferase (382 aa).

It belongs to the sulfate adenylyltransferase family.

It catalyses the reaction sulfate + ATP + H(+) = adenosine 5'-phosphosulfate + diphosphate. It participates in sulfur metabolism; hydrogen sulfide biosynthesis; sulfite from sulfate: step 1/3. The protein is Sulfate adenylyltransferase of Ignicoccus hospitalis (strain KIN4/I / DSM 18386 / JCM 14125).